A 458-amino-acid polypeptide reads, in one-letter code: Probable alpha-L-glutamate ligase (458 aa).

Residues 1 to 162 (MSDNKFIIGS…YGVKTAKKSG (162 aa)) form a unknown region. An alpha-L-glutamate ligase region spans residues 163–458 (LKIGLLASNP…IEKKLGWKAD (296 aa)). The region spanning 267 to 450 (LQLLQKNNLD…IAGAMIESIE (184 aa)) is the ATP-grasp domain. Residues Lys304, 341–342 (EF), Asp350, and 374–376 (RAN) contribute to the ATP site. Mg(2+) is bound by residues Asp411, Glu423, and Asn425. Mn(2+) is bound by residues Asp411, Glu423, and Asn425.

It in the C-terminal section; belongs to the RimK family. The cofactor is Mg(2+). Requires Mn(2+) as cofactor.

This chain is Probable alpha-L-glutamate ligase, found in Shewanella pealeana (strain ATCC 700345 / ANG-SQ1).